The sequence spans 411 residues: Heparan-sulfate 6-O-sulfotransferase 1 (411 aa).

The Cytoplasmic segment spans residues 11–17 (MVERASK). A helical; Signal-anchor for type II membrane protein membrane pass occupies residues 18–37 (FVLVVAGSVCFMLILYQYAG). Over 38–411 (PGLSLGAPGG…DYMSHIIEKW (374 aa)) the chain is Lumenal. 93–101 (HIQKTGGTT) lines the 3'-phosphoadenylyl sulfate pocket. Residues 123 to 124 (KK), Arg140, Trp145, and His150 contribute to the substrate site. Residue His150 is the Proton acceptor of the active site. Residues Arg185 and Ser193 each contribute to the 3'-phosphoadenylyl sulfate site. Substrate contacts are provided by His197 and Trp204. The N-linked (GlcNAc...) asparagine glycan is linked to Asn264. 317 to 319 (MQY) is a 3'-phosphoadenylyl sulfate binding site. Asn320 carries N-linked (GlcNAc...) asparagine glycosylation. 323-324 (RA) lines the 3'-phosphoadenylyl sulfate pocket. A coiled-coil region spans residues 352–387 (KDLFQQRYQYKRQLERREQRLRSREERLLHRAKEAL).

It belongs to the sulfotransferase 6 family. Post-translationally, N-glycosylated. In terms of tissue distribution, expressed in fetal brain.

It is found in the membrane. The enzyme catalyses alpha-D-glucosaminyl-[heparan sulfate](n) + 3'-phosphoadenylyl sulfate = 6-sulfo-alpha-D-glucosaminyl-[heparan sulfate](n) + adenosine 3',5'-bisphosphate + H(+). In terms of biological role, 6-O-sulfation enzyme which catalyzes the transfer of sulfate from 3'-phosphoadenosine 5'-phosphosulfate (PAPS) to position 6 of the N-sulfoglucosamine residue (GlcNS) of heparan sulfate. Critical for normal neuronal development where it may play a role in neuron branching. May also play a role in limb development. May prefer iduronic acid. The chain is Heparan-sulfate 6-O-sulfotransferase 1 from Homo sapiens (Human).